Reading from the N-terminus, the 193-residue chain is Peptidyl-tRNA hydrolase 1 (193 aa).

Residue Tyr27 coordinates tRNA. His32 acts as the Proton acceptor in catalysis. TRNA-binding residues include Phe80, Asn82, and Asn128.

It belongs to the PTH family. Monomer.

Its subcellular location is the cytoplasm. The enzyme catalyses an N-acyl-L-alpha-aminoacyl-tRNA + H2O = an N-acyl-L-amino acid + a tRNA + H(+). Hydrolyzes ribosome-free peptidyl-tRNAs (with 1 or more amino acids incorporated), which drop off the ribosome during protein synthesis, or as a result of ribosome stalling. In terms of biological role, catalyzes the release of premature peptidyl moieties from peptidyl-tRNA molecules trapped in stalled 50S ribosomal subunits, and thus maintains levels of free tRNAs and 50S ribosomes. The protein is Peptidyl-tRNA hydrolase 1 of Corynebacterium jeikeium (strain K411).